Reading from the N-terminus, the 551-residue chain is Protein GZF3 (551 aa).

The tract at residues D17–W43 is disordered. A GATA-type zinc finger spans residues C131–C155. Disordered regions lie at residues G212–K260, L379–S400, and S467–L490. Polar residues predominate over residues S228 to K239. Basic and acidic residues predominate over residues P244–S254. Residues D388 to S400 are compositionally biased toward polar residues. A compositionally biased stretch (low complexity) spans S467–V477. A compositionally biased stretch (basic and acidic residues) spans S478 to L490.

The protein resides in the nucleus. In Saccharomyces cerevisiae (strain ATCC 204508 / S288c) (Baker's yeast), this protein is Protein GZF3 (GZF3).